Consider the following 425-residue polypeptide: Nicotinate dehydrogenase large molybdopterin subunit (425 aa).

Se-Mo-molybdopterin cytosine dinucleotide-binding positions include Gln-208 and 238-240 (GFG).

It belongs to the xanthine dehydrogenase family. Heterooctamer of NDHM, NDHL, NDHS and NDHF. Dimer of heterotetramers. The cofactor is Se-Mo-molybdopterin cytosine dinucleotide.

The catalysed reaction is nicotinate + NADP(+) + H2O = 6-hydroxynicotinate + NADPH + H(+). It functions in the pathway cofactor degradation; nicotinate degradation; 6-hydroxynicotinate from nicotinate: step 1/1. Reversibly inactivated by selenide and sulfide. Not inhibited by cyanide. Catalyzes the hydroxylation of nicotinate to 6-hydroxynicotinate. Also active against 2-pyrazinecarboxylic acid, but inactive against other nicotinate analogs. The chain is Nicotinate dehydrogenase large molybdopterin subunit (ndhL) from Eubacterium barkeri (Clostridium barkeri).